A 139-amino-acid polypeptide reads, in one-letter code: Plastocyanin (139 aa).

Residues 1-34 (MKLISASLRRFSLAVLTILLVVSSFAVFTPSASA) form the signal peptide. Residues 35–139 (ETYQVKLGTD…GMVGTITVQG (105 aa)) form the Plastocyanin-like domain. 4 residues coordinate Cu cation: H73, C123, H126, and M131.

This sequence belongs to the plastocyanin family. Requires Cu(2+) as cofactor.

It is found in the cellular thylakoid membrane. Its function is as follows. Participates in electron transfer between P700 and the cytochrome b6-f complex in photosystem I. The chain is Plastocyanin from Nostoc punctiforme (strain ATCC 29133 / PCC 73102).